Consider the following 51-residue polypeptide: UPF0337 protein NE0131 (51 aa).

The protein belongs to the UPF0337 (CsbD) family.

The sequence is that of UPF0337 protein NE0131 from Nitrosomonas europaea (strain ATCC 19718 / CIP 103999 / KCTC 2705 / NBRC 14298).